Here is a 440-residue protein sequence, read N- to C-terminus: Tol-Pal system protein TolB (440 aa).

Residues 1-21 (MKIFGKWLLVTLLICSMPVKA) form the signal peptide.

Belongs to the TolB family. As to quaternary structure, the Tol-Pal system is composed of five core proteins: the inner membrane proteins TolA, TolQ and TolR, the periplasmic protein TolB and the outer membrane protein Pal. They form a network linking the inner and outer membranes and the peptidoglycan layer.

Its subcellular location is the periplasm. Functionally, part of the Tol-Pal system, which plays a role in outer membrane invagination during cell division and is important for maintaining outer membrane integrity. This Shewanella halifaxensis (strain HAW-EB4) protein is Tol-Pal system protein TolB.